A 72-amino-acid polypeptide reads, in one-letter code: Protein kish (72 aa).

The N-terminal stretch at 1-26 is a signal peptide; that stretch reads MVAIFNFQSLLVVILLFICTCTYIRG. Topologically, residues 27-47 are extracellular; sequence SYPSLLEVRDKHSFSGLPRKA. Residues 48 to 68 traverse the membrane as a helical segment; that stretch reads AIIGERLSPWVSACCLIMGLW. At 69–72 the chain is on the cytoplasmic side; the sequence is TLYN.

The protein belongs to the KISH family.

It localises to the golgi apparatus membrane. Functionally, involved in the early part of the secretory pathway. The polypeptide is Protein kish (tmem167) (Dictyostelium discoideum (Social amoeba)).